The sequence spans 398 residues: MSEQLLTASMPIDAAPLSDHAVATAAPATSKINLLDLNRQQMREFFAEMGEKPFRADQVMKWMYHYCYDDFEQMTDINKGLRAKLQRVAEIRAPEVAEEQRSTDGTIKWAIKVGDQQVETVYIPEGDRATLCVSSQVGCALECKFCSTAQQGFNRNLRVSEIIGQVWRAAKIIGAVKATGIRPITNVVMMGMGEPLLNLNNVVPAMDIMMDDFGFGLSKRRVTLSTSGVVPALDKLGDMIDVALAISLHAPTDDIRDEIVPINRKYNIETFLAAVRRYLAKSNANGGRVTVEYVMLDHINDSTEQAHQLAECLKDTPCKINLIPWNPFPGAPYGRSSNSRVDRFSKVLMEYGFTTIVRKTRGDDIDAACGQLAGEVIDRTKRTLKKKMAGEPIAIKTV.

Glu-119 functions as the Proton acceptor in the catalytic mechanism. A Radical SAM core domain is found at 125-364; sequence EGDRATLCVS…TIVRKTRGDD (240 aa). Residues Cys-132 and Cys-369 are joined by a disulfide bond. [4Fe-4S] cluster is bound by residues Cys-139, Cys-143, and Cys-146. Residues 193–194, Ser-225, 247–249, and Asn-326 each bind S-adenosyl-L-methionine; these read GE and SLH. Cys-369 acts as the S-methylcysteine intermediate in catalysis.

The protein belongs to the radical SAM superfamily. RlmN family. Requires [4Fe-4S] cluster as cofactor.

It localises to the cytoplasm. It catalyses the reaction adenosine(2503) in 23S rRNA + 2 reduced [2Fe-2S]-[ferredoxin] + 2 S-adenosyl-L-methionine = 2-methyladenosine(2503) in 23S rRNA + 5'-deoxyadenosine + L-methionine + 2 oxidized [2Fe-2S]-[ferredoxin] + S-adenosyl-L-homocysteine. It carries out the reaction adenosine(37) in tRNA + 2 reduced [2Fe-2S]-[ferredoxin] + 2 S-adenosyl-L-methionine = 2-methyladenosine(37) in tRNA + 5'-deoxyadenosine + L-methionine + 2 oxidized [2Fe-2S]-[ferredoxin] + S-adenosyl-L-homocysteine. Specifically methylates position 2 of adenine 2503 in 23S rRNA and position 2 of adenine 37 in tRNAs. m2A2503 modification seems to play a crucial role in the proofreading step occurring at the peptidyl transferase center and thus would serve to optimize ribosomal fidelity. The sequence is that of Dual-specificity RNA methyltransferase RlmN from Yersinia enterocolitica serotype O:8 / biotype 1B (strain NCTC 13174 / 8081).